Here is a 513-residue protein sequence, read N- to C-terminus: NADH-quinone oxidoreductase chain 13 (513 aa).

14 helical membrane-spanning segments follow: residues 3-23 (NLLS…ALFL), 34-54 (AKWL…FVLF), 81-101 (VDGI…LTIL), 112-132 (EYMI…TALD), 133-153 (LVLF…IIGI), 164-184 (FKFF…MIAM), 211-231 (MTVV…SFAV), 250-270 (PTAG…YGFL), 277-297 (FPVA…IAIV), 312-332 (VIAY…FAAN), 340-360 (IFQM…VGVI), 383-403 (AAVF…SGFV), 418-438 (WVAL…LWLY), and 463-483 (WVFI…RLVT).

Belongs to the complex I subunit 4 family. In terms of assembly, NDH-1 is composed of at least 14 different subunits, Nqo1 to Nqo14. The complex has a L-shaped structure, with the hydrophobic arm (subunits Nqo7, Nqo8, Nqo10 to Nqo14) embedded in the inner membrane and the hydrophilic peripheral arm (subunits Nqo1 to Nqo6, Nqo9) protruding into the bacterial cytoplasm. The hydrophilic domain contains all the redox centers.

The protein localises to the cell inner membrane. It catalyses the reaction a quinone + NADH + 5 H(+)(in) = a quinol + NAD(+) + 4 H(+)(out). Its function is as follows. NDH-1 shuttles electrons from NADH, via FMN and iron-sulfur (Fe-S) centers, to quinones in the respiratory chain. The immediate electron acceptor for the enzyme in this species is believed to be ubiquinone. Couples the redox reaction to proton translocation (for every two electrons transferred, four hydrogen ions are translocated across the cytoplasmic membrane), and thus conserves the redox energy in a proton gradient. The sequence is that of NADH-quinone oxidoreductase chain 13 from Paracoccus denitrificans.